Reading from the N-terminus, the 451-residue chain is 3-phosphoshikimate 1-carboxyvinyltransferase (451 aa).

Residues Lys30, Ser31, and Arg35 each coordinate 3-phosphoshikimate. Phosphoenolpyruvate is bound at residue Lys30. 2 residues coordinate phosphoenolpyruvate: Gly103 and Arg131. Residues Ser176, Gln178, Asp329, and Lys356 each coordinate 3-phosphoshikimate. Gln178 serves as a coordination point for phosphoenolpyruvate. Asp329 serves as the catalytic Proton acceptor. Positions 360 and 404 each coordinate phosphoenolpyruvate.

This sequence belongs to the EPSP synthase family. Monomer.

It localises to the cytoplasm. It catalyses the reaction 3-phosphoshikimate + phosphoenolpyruvate = 5-O-(1-carboxyvinyl)-3-phosphoshikimate + phosphate. It participates in metabolic intermediate biosynthesis; chorismate biosynthesis; chorismate from D-erythrose 4-phosphate and phosphoenolpyruvate: step 6/7. Its function is as follows. Catalyzes the transfer of the enolpyruvyl moiety of phosphoenolpyruvate (PEP) to the 5-hydroxyl of shikimate-3-phosphate (S3P) to produce enolpyruvyl shikimate-3-phosphate and inorganic phosphate. The protein is 3-phosphoshikimate 1-carboxyvinyltransferase of Parvibaculum lavamentivorans (strain DS-1 / DSM 13023 / NCIMB 13966).